The primary structure comprises 458 residues: Chondroitin hydrolase (458 aa).

The signal sequence occupies residues 1–22 (MVIVWYHQLLLVLLIFIGAAKG). In terms of domain architecture, EGF-like spans 358–401 (NLDKCRMERCEGRGECYLPRPKTNPAIYNFACRCERPYFGKSCE). 3 disulfides stabilise this stretch: Cys-362/Cys-373, Cys-367/Cys-389, and Cys-391/Cys-400.

The protein belongs to the glycosyl hydrolase 56 family.

Functionally, endo-beta-galactosaminidase that specifically hydrolyzes chondroitin, releasing GlcUA-beta-(1-&gt;3)-GalNAc-beta-(1-&gt;4)-GlcUA-beta-(1-&gt;3)-GalNAc as the main product. Also hydrolyzes to a lesser extent chondroitin sulfates (CS-A, CS-C) and hyaluronic acid. May regulate the function of chondroitin in cell division. This is Chondroitin hydrolase from Caenorhabditis elegans.